We begin with the raw amino-acid sequence, 562 residues long: NAD-dependent malic enzyme (562 aa).

The Proton donor role is filled by tyrosine 101. Residue arginine 154 coordinates NAD(+). Lysine 172 functions as the Proton acceptor in the catalytic mechanism. A divalent metal cation contacts are provided by glutamate 243, aspartate 244, and aspartate 267. NAD(+)-binding residues include aspartate 267 and asparagine 415.

The protein belongs to the malic enzymes family. In terms of assembly, homotetramer. Requires Mg(2+) as cofactor. The cofactor is Mn(2+).

It catalyses the reaction (S)-malate + NAD(+) = pyruvate + CO2 + NADH. The enzyme catalyses oxaloacetate + H(+) = pyruvate + CO2. The protein is NAD-dependent malic enzyme of Shewanella loihica (strain ATCC BAA-1088 / PV-4).